Here is a 67-residue protein sequence, read N- to C-terminus: Beta-defensin 1 (67 aa).

The N-terminal stretch at 1–22 (MRIHYLLFAVLFLFLMPVPGEG) is a signal peptide. Cystine bridges form between Cys33/Cys62, Cys40/Cys55, and Cys45/Cys63.

Monomer. Homodimer. As to expression, highly expressed in tongue, nasopharyngeal mucosa and skin, and to a lower extent in the Eustachian tube, lung and trachea.

It is found in the secreted. It localises to the membrane. In terms of biological role, has antibacterial activity against Gram-positive bacterium S.pneumoniae Serotype 14. Is also active against Gram-negative bacteria M.catarrhalis 1857, and non-typeable H.influenzae strains 86-028NP and 1128. Has antifungal activity against C.albicans. May have a role in maintaining sterility in the middle ear. May act as a ligand for C-C chemokine receptor CCR6. Positively regulates the sperm motility and bactericidal activity in a CCR6-dependent manner. Binds to CCR6 and triggers Ca2+ mobilization in the sperm which is important for its motility. The polypeptide is Beta-defensin 1 (DEFB1) (Chinchilla lanigera (Long-tailed chinchilla)).